Reading from the N-terminus, the 514-residue chain is Cilia- and flagella-associated protein 53 (514 aa).

2 coiled-coil regions span residues 91–176 (VINT…EKKV) and 205–478 (WEED…AGLA). Disordered regions lie at residues 261–296 (QNKAQIKREDEQEKLQKQKRRQETRSSLKKAVQDKI) and 495–514 (QALSQNVHPMRRGYPDKPPL).

This sequence belongs to the CFAP53 family. Microtubule inner protein component of sperm flagellar doublet microtubules. Interacts with PIERCE1 and PIERCE2; the interactions link outer dynein arms docking complex (ODA-DC) to the internal microtubule inner proteins (MIP) in cilium axoneme. Interacts with CCDC38. Interacts with CCDC42 and IFT88. Interacts with centriolar satellite proteins PIBF1/CEP90 and PCM1. Interacts with dyneins DNAIC1, DNAIC2 AND DNAH11 and with ODA-DC component ODAD4/TTC25. In terms of tissue distribution, expressed predominantly in testis (at protein level). In embryos at 8 dpc, specifically expressed in the node, in particular within the pit cells that are located at the center of the node and have rotating monocilia on their apical surface. In the adult, expressed in epithelial cells of the trachea, brain ventricles, oviduct and testis.

It is found in the cytoplasm. Its subcellular location is the cytoskeleton. The protein resides in the cilium axoneme. It localises to the flagellum axoneme. The protein localises to the microtubule organizing center. It is found in the centrosome. Its subcellular location is the centriolar satellite. The protein resides in the spindle pole. In terms of biological role, microtubule inner protein (MIP) part of the dynein-decorated doublet microtubules (DMTs) in cilia axoneme, which is required for motile cilia beating. Regulates motility patterns of both 9+0 and 9+2 motile cilia through differential localization and recruitment of axonemal dynein components. Required for centriolar satellite integrity and non-motile cilium assembly. Required for motile cilium formation. Through its role in the beating of primary cilia, involved in the establishment of organ laterality during embryogenesis. Required for sperm flagellum biogenesis and is essential for male fertility. This is Cilia- and flagella-associated protein 53 from Mus musculus (Mouse).